Consider the following 40-residue polypeptide: MADTTGRIPLWVIGTVAGILVIGIIGIFFYGSYSGLGSSL.

The helical transmembrane segment at 8-28 threads the bilayer; that stretch reads IPLWVIGTVAGILVIGIIGIF.

Belongs to the PsbJ family. In terms of assembly, PSII is composed of 1 copy each of membrane proteins PsbA, PsbB, PsbC, PsbD, PsbE, PsbF, PsbH, PsbI, PsbJ, PsbK, PsbL, PsbM, PsbT, PsbX, PsbY, PsbZ, Psb30/Ycf12, at least 3 peripheral proteins of the oxygen-evolving complex and a large number of cofactors. It forms dimeric complexes.

Its subcellular location is the plastid. It is found in the chloroplast thylakoid membrane. In terms of biological role, one of the components of the core complex of photosystem II (PSII). PSII is a light-driven water:plastoquinone oxidoreductase that uses light energy to abstract electrons from H(2)O, generating O(2) and a proton gradient subsequently used for ATP formation. It consists of a core antenna complex that captures photons, and an electron transfer chain that converts photonic excitation into a charge separation. In Lobularia maritima (Sweet alyssum), this protein is Photosystem II reaction center protein J.